Here is a 374-residue protein sequence, read N- to C-terminus: Ribonuclease D (374 aa).

Residues 6-171 (IISTTEDLKK…RATRVILLSK (166 aa)) form the 3'-5' exonuclease domain. The HRDC domain occupies 213–292 (DRKSIGVAQE…ARALNKKEVD (80 aa)).

The protein belongs to the RNase D family. It depends on a divalent metal cation as a cofactor.

It localises to the cytoplasm. It catalyses the reaction Exonucleolytic cleavage that removes extra residues from the 3'-terminus of tRNA to produce 5'-mononucleotides.. Functionally, exonuclease involved in the 3' processing of various precursor tRNAs. Initiates hydrolysis at the 3'-terminus of an RNA molecule and releases 5'-mononucleotides. The sequence is that of Ribonuclease D from Desulfotalea psychrophila (strain LSv54 / DSM 12343).